A 301-amino-acid chain; its full sequence is Mating type protein mtA-1 (301 aa).

The alpha box DNA-binding region spans 49 to 104; it reads APKKKVNGFMGFRSYYSSLFSQFPQKARSPFMTILWQHDPFHNEWDFMCSVYSSIR.

The protein belongs to the MATALPHA1 family.

The protein resides in the nucleus. Mating type proteins are sequence specific DNA-binding proteins that act as master switches in fungal differentiation by controlling gene expression in a cell type-specific fashion. Transcriptional activator that induces the transcription of alpha-specific genes. The chain is Mating type protein mtA-1 (MTA1) from Sordaria fimicola.